A 393-amino-acid polypeptide reads, in one-letter code: Methylthioribose kinase (393 aa).

ATP contacts are provided by residues N38, K53, and 107–109 (EDL). A substrate-binding site is contributed by D225. 242-244 (DPE) lines the ATP pocket. R332 lines the substrate pocket.

It belongs to the methylthioribose kinase family. As to quaternary structure, homodimer.

The enzyme catalyses 5-(methylsulfanyl)-D-ribose + ATP = 5-(methylsulfanyl)-alpha-D-ribose 1-phosphate + ADP + H(+). It functions in the pathway amino-acid biosynthesis; L-methionine biosynthesis via salvage pathway; S-methyl-5-thio-alpha-D-ribose 1-phosphate from S-methyl-5'-thioadenosine (hydrolase route): step 2/2. Catalyzes the phosphorylation of methylthioribose into methylthioribose-1-phosphate. This is Methylthioribose kinase from Bacillus cereus (strain 03BB102).